Consider the following 380-residue polypeptide: Cytochrome b (380 aa).

4 helical membrane-spanning segments follow: residues 34 to 54 (FGSL…LLAM), 78 to 99 (WLIR…YLHI), 114 to 134 (WNVG…GYVL), and 179 to 199 (FFAL…VHLT). His-84 and His-98 together coordinate heme b. His-183 and His-197 together coordinate heme b. A ubiquinone is bound at residue His-202. 4 helical membrane passes run 227–247 (IKDI…ALFS), 289–309 (LGGV…PLLH), 321–341 (LSQI…WIGS), and 348–368 (FIII…VLFP).

The protein belongs to the cytochrome b family. The cytochrome bc1 complex contains 11 subunits: 3 respiratory subunits (MT-CYB, CYC1 and UQCRFS1), 2 core proteins (UQCRC1 and UQCRC2) and 6 low-molecular weight proteins (UQCRH/QCR6, UQCRB/QCR7, UQCRQ/QCR8, UQCR10/QCR9, UQCR11/QCR10 and a cleavage product of UQCRFS1). This cytochrome bc1 complex then forms a dimer. Heme b serves as cofactor.

It is found in the mitochondrion inner membrane. Functionally, component of the ubiquinol-cytochrome c reductase complex (complex III or cytochrome b-c1 complex) that is part of the mitochondrial respiratory chain. The b-c1 complex mediates electron transfer from ubiquinol to cytochrome c. Contributes to the generation of a proton gradient across the mitochondrial membrane that is then used for ATP synthesis. The protein is Cytochrome b (MT-CYB) of Vireo olivaceus (Red-eyed vireo).